The primary structure comprises 86 residues: Small ribosomal subunit protein uS15 (86 aa).

A disordered region spans residues 1-22 (MSIDTQKVIEDNKRSSADTGSP). Residues 7-16 (KVIEDNKRSS) show a composition bias toward basic and acidic residues.

Belongs to the universal ribosomal protein uS15 family. As to quaternary structure, part of the 30S ribosomal subunit. Forms a bridge to the 50S subunit in the 70S ribosome, contacting the 23S rRNA.

Its function is as follows. One of the primary rRNA binding proteins, it binds directly to 16S rRNA where it helps nucleate assembly of the platform of the 30S subunit by binding and bridging several RNA helices of the 16S rRNA. Functionally, forms an intersubunit bridge (bridge B4) with the 23S rRNA of the 50S subunit in the ribosome. This chain is Small ribosomal subunit protein uS15, found in Stenotrophomonas maltophilia (strain R551-3).